The primary structure comprises 511 residues: Bifunctional purine biosynthesis protein PurH (511 aa).

Residues 1 to 145 (MKQRALVSVS…KNHKFVSVIV (145 aa)) enclose the MGS-like domain.

The protein belongs to the PurH family.

It carries out the reaction (6R)-10-formyltetrahydrofolate + 5-amino-1-(5-phospho-beta-D-ribosyl)imidazole-4-carboxamide = 5-formamido-1-(5-phospho-D-ribosyl)imidazole-4-carboxamide + (6S)-5,6,7,8-tetrahydrofolate. The catalysed reaction is IMP + H2O = 5-formamido-1-(5-phospho-D-ribosyl)imidazole-4-carboxamide. It participates in purine metabolism; IMP biosynthesis via de novo pathway; 5-formamido-1-(5-phospho-D-ribosyl)imidazole-4-carboxamide from 5-amino-1-(5-phospho-D-ribosyl)imidazole-4-carboxamide (10-formyl THF route): step 1/1. It functions in the pathway purine metabolism; IMP biosynthesis via de novo pathway; IMP from 5-formamido-1-(5-phospho-D-ribosyl)imidazole-4-carboxamide: step 1/1. This Bacillus cereus (strain AH187) protein is Bifunctional purine biosynthesis protein PurH.